We begin with the raw amino-acid sequence, 128 residues long: Glycine cleavage system H protein (128 aa).

The Lipoyl-binding domain occupies 24–106; it reads SVTVGITAHA…YGDGWFFKIK (83 aa). Position 65 is an N6-lipoyllysine (lysine 65).

Belongs to the GcvH family. In terms of assembly, the glycine cleavage system is composed of four proteins: P, T, L and H. Requires (R)-lipoate as cofactor.

Functionally, the glycine cleavage system catalyzes the degradation of glycine. The H protein shuttles the methylamine group of glycine from the P protein to the T protein. In Chromobacterium violaceum (strain ATCC 12472 / DSM 30191 / JCM 1249 / CCUG 213 / NBRC 12614 / NCIMB 9131 / NCTC 9757 / MK), this protein is Glycine cleavage system H protein.